Reading from the N-terminus, the 847-residue chain is DNA mismatch repair protein MutS (847 aa).

602–609 contributes to the ATP binding site; it reads GPNMSGKS.

It belongs to the DNA mismatch repair MutS family.

Functionally, this protein is involved in the repair of mismatches in DNA. It is possible that it carries out the mismatch recognition step. This protein has a weak ATPase activity. The protein is DNA mismatch repair protein MutS of Streptococcus uberis (strain ATCC BAA-854 / 0140J).